The following is a 508-amino-acid chain: Maturase K (508 aa).

Belongs to the intron maturase 2 family. MatK subfamily.

Its subcellular location is the plastid. The protein localises to the chloroplast. Usually encoded in the trnK tRNA gene intron. Probably assists in splicing its own and other chloroplast group II introns. This Stewartia pseudocamellia (Japanese stewartia) protein is Maturase K.